A 527-amino-acid polypeptide reads, in one-letter code: G patch domain-containing protein 2 (527 aa).

The disordered stretch occupies residues 35-135 (LEESSEQARG…RPSSNLSSSV (101 aa)). Basic residues predominate over residues 62–76 (RQARKRRGRKRRSYN). Residues 97–116 (EPSKDYREKHSNNKKDRSDS) show a composition bias toward basic and acidic residues. Serine 114, serine 116, and serine 145 each carry phosphoserine. Disordered stretches follow at residues 175 to 281 (SSKR…GDDE), 350 to 375 (TPSK…GSNK), and 480 to 527 (TPGS…GNPA). Residues 186 to 196 (GCRDQDMDNDR) are compositionally biased toward basic and acidic residues. Over residues 206-215 (KKVKKRKLKG) the composition is skewed to basic residues. Residues 231-257 (SEERSQPNKDRMEYEEQKASDELRSES) show a composition bias toward basic and acidic residues. The G-patch domain maps to 466-512 (ESNIGNRMLQSMGWTPGSGLGRDGRGIAEPVQAVQRPKGLGLGFPLP). Over residues 510-527 (PLPKSSPTSPAPTSGNPA) the composition is skewed to low complexity.

Interacts with DHX15.

It localises to the nucleus speckle. It is found in the nucleus. Its subcellular location is the nucleolus. In terms of biological role, enhances the ATPase activity of DHX15 in vitro. This Mus musculus (Mouse) protein is G patch domain-containing protein 2 (Gpatch2).